The following is a 167-amino-acid chain: Intermembrane phospholipid transport system binding protein MlaD (167 aa).

Residues 1–6 (MRQTIK) lie on the Cytoplasmic side of the membrane. A helical; Signal-anchor for type II membrane protein membrane pass occupies residues 7 to 27 (YEFWVGLFLLLGIGALVFLGL). Over 28–167 (RVANVQGFAE…GNEKSESTEQ (140 aa)) the chain is Periplasmic. The MCE/MlaD stretch occupies residues 40–118 (SYTVTATFDN…GEQYIALTMG (79 aa)).

The protein belongs to the MlaD family. The complex is composed of two ATP-binding proteins (MlaF), two transmembrane proteins (MlaE), two cytoplasmic solute-binding proteins (MlaB) and six periplasmic solute-binding proteins (MlaD).

It localises to the cell inner membrane. In terms of biological role, part of the ABC transporter complex MlaFEDB, which is involved in a phospholipid transport pathway that maintains lipid asymmetry in the outer membrane by retrograde trafficking of phospholipids from the outer membrane to the inner membrane. MlaD functions in substrate binding with strong affinity for phospholipids and modulates ATP hydrolytic activity of the complex. The polypeptide is Intermembrane phospholipid transport system binding protein MlaD (Haemophilus influenzae (strain ATCC 51907 / DSM 11121 / KW20 / Rd)).